The sequence spans 338 residues: Large ribosomal subunit protein uL10 (338 aa).

Residues 298–338 (TVQQSQSQQPAAEEKKEEKKEEEKKGPSEEEIASGLASLFG) are disordered. Residues 309–325 (AEEKKEEKKEEEKKGPS) show a composition bias toward basic and acidic residues.

The protein belongs to the universal ribosomal protein uL10 family. As to quaternary structure, part of the 50S ribosomal subunit. Forms part of the ribosomal stalk which helps the ribosome interact with GTP-bound translation factors. Forms a heptameric L10(L12)2(L12)2(L12)2 complex, where L10 forms an elongated spine to which the L12 dimers bind in a sequential fashion.

Functionally, forms part of the ribosomal stalk, playing a central role in the interaction of the ribosome with GTP-bound translation factors. The chain is Large ribosomal subunit protein uL10 from Saccharolobus solfataricus (strain ATCC 35092 / DSM 1617 / JCM 11322 / P2) (Sulfolobus solfataricus).